The following is a 440-amino-acid chain: Ribosomal protein uS12 methylthiotransferase RimO (440 aa).

An MTTase N-terminal domain is found at P6–P116. The [4Fe-4S] cluster site is built by C15, C51, C80, C149, C153, and C156. One can recognise a Radical SAM core domain in the interval L135–A373. Residues Q376 to V440 form the TRAM domain.

The protein belongs to the methylthiotransferase family. RimO subfamily. Requires [4Fe-4S] cluster as cofactor.

The protein resides in the cytoplasm. It carries out the reaction L-aspartate(89)-[ribosomal protein uS12]-hydrogen + (sulfur carrier)-SH + AH2 + 2 S-adenosyl-L-methionine = 3-methylsulfanyl-L-aspartate(89)-[ribosomal protein uS12]-hydrogen + (sulfur carrier)-H + 5'-deoxyadenosine + L-methionine + A + S-adenosyl-L-homocysteine + 2 H(+). Catalyzes the methylthiolation of an aspartic acid residue of ribosomal protein uS12. The polypeptide is Ribosomal protein uS12 methylthiotransferase RimO (Pseudomonas aeruginosa (strain ATCC 15692 / DSM 22644 / CIP 104116 / JCM 14847 / LMG 12228 / 1C / PRS 101 / PAO1)).